A 423-amino-acid chain; its full sequence is Keratin, type I cytoskeletal 18 (423 aa).

At serine 2 the chain carries N-acetylserine. A head region spans residues 2–71; that stretch reads SFTTRSTTFS…GLAGMGGIQT (70 aa). 4 positions are modified to phosphoserine: serine 7, serine 11, serine 16, and serine 19. 2 positions are modified to phosphoserine; alternate: serine 31 and serine 32. O-linked (GlcNAc) serine; alternate glycosylation is found at serine 31 and serine 32. Serine 35 carries the phosphoserine modification. The residue at position 37 (tyrosine 37) is a Phosphotyrosine. Residue serine 43 is modified to Phosphoserine. An Omega-N-methylarginine modification is found at arginine 46. At serine 50 the chain carries Phosphoserine; alternate. A glycan (O-linked (GlcNAc) serine; alternate) is linked at serine 50. Serine 52 bears the Phosphoserine; by MAPKAPK2 and MAPKAPK3 mark. Phosphoserine is present on residues serine 57 and serine 60. Residues 62–366 are necessary for interaction with PNN; it reads GLAGMGGIQT…EALLNIKVKL (305 aa). The interval 69 to 121 is interaction with TRADD; the sequence is IQTEKETMQDLNDRLASYLDKVKSLETENRRLESKIREHLEKKGPQGVRDWGH. The segment at 72–107 is coil 1A; sequence EKETMQDLNDRLASYLDKVKSLETENRRLESKIREH. An IF rod domain is found at 72-384; the sequence is EKETMQDLND…RLLEDGEDFS (313 aa). A Glycyl lysine isopeptide (Lys-Gly) (interchain with G-Cter in SUMO2) cross-link involves residue lysine 73. Serine 85 and serine 92 each carry phosphoserine. The segment at 108–125 is linker 1; sequence LEKKGPQGVRDWGHYFKI. The residue at position 124 (lysine 124) is an N6-acetyllysine. Residues 126–217 form a coil 1B region; that stretch reads IEDLRAQIFA…KNHEEEVQGL (92 aa). Phosphoserine is present on residues serine 137 and serine 170. Residues 218–241 are linker 12; that stretch reads EAQIASSGLTVEVDAPKSQDLSKI. Residues 236-384 are interaction with DNAJB6; it reads QDLSKIMADI…RLLEDGEDFS (149 aa). Lysine 240 participates in a covalent cross-link: Glycyl lysine isopeptide (Lys-Gly) (interchain with G-Cter in SUMO2). The tract at residues 242 to 380 is coil 2; that stretch reads MADIRAQYEA…ATYRRLLEDG (139 aa). Threonine 295 carries the post-translational modification Phosphothreonine. Serine 316 carries the phosphoserine modification. Glycyl lysine isopeptide (Lys-Gly) (interchain with G-Cter in SUMO2) cross-links involve residues lysine 363 and lysine 365. Positions 381-423 are tail; sequence EDFSLNDALDSSNSMQTVQKTTTRKIVDGRVVSETNDTRVLRH. A phosphoserine mark is found at serine 384, serine 391, serine 392, and serine 394. Threonine 397 carries the post-translational modification Phosphothreonine.

It belongs to the intermediate filament family. As to quaternary structure, heterotetramer of two type I and two type II keratins. KRT18 associates with KRT8. Interacts with PLEC isoform 1C, when in a heterodimer with KRT8. Interacts with PNN and mutated CFTR. Interacts with YWHAE, YWHAH and YWHAZ only when phosphorylated. Interacts with the thrombin-antithrombin complex. Interacts with DNAJB6, TCHP and TRADD. Interacts with FAM83H. Interacts with EPPK1. Interacts with PKP1 and PKP2. Phosphorylation increases by IL-6. In terms of processing, proteolytically cleaved by caspases during epithelial cell apoptosis. Cleavage occurs at Asp-231 by either caspase-3, caspas-6 or caspase-7. Post-translationally, O-GlcNAcylation increases solubility, and decreases stability by inducing proteasomal degradation. As to expression, expressed in endoderm, intestinal epithelial cells and in most extraembryonic tissues.

It is found in the nucleus matrix. It localises to the cytoplasm. Its subcellular location is the perinuclear region. The protein resides in the nucleus. The protein localises to the nucleolus. When phosphorylated, plays a role in filament reorganization. Involved in the delivery of mutated CFTR to the plasma membrane. Involved in the uptake of thrombin-antithrombin complexes by hepatic cells. Together with KRT8, is involved in interleukin-6 (IL-6)-mediated barrier protection. The sequence is that of Keratin, type I cytoskeletal 18 (Krt18) from Mus musculus (Mouse).